A 192-amino-acid chain; its full sequence is 7-methyl-GTP pyrophosphatase (192 aa).

The active-site Proton acceptor is the Asp69.

This sequence belongs to the Maf family. YceF subfamily. A divalent metal cation serves as cofactor.

It localises to the cytoplasm. The enzyme catalyses N(7)-methyl-GTP + H2O = N(7)-methyl-GMP + diphosphate + H(+). Nucleoside triphosphate pyrophosphatase that hydrolyzes 7-methyl-GTP (m(7)GTP). May have a dual role in cell division arrest and in preventing the incorporation of modified nucleotides into cellular nucleic acids. The chain is 7-methyl-GTP pyrophosphatase from Pseudomonas aeruginosa (strain ATCC 15692 / DSM 22644 / CIP 104116 / JCM 14847 / LMG 12228 / 1C / PRS 101 / PAO1).